A 63-amino-acid polypeptide reads, in one-letter code: MSKRCAITGKGPMVGNNVSHANNKTKRRFLPNLRTIRVTLEDGTTRRIKVAASTLRTMKKQSN.

The tract at residues M1–H20 is disordered.

The protein belongs to the bacterial ribosomal protein bL28 family.

This Campylobacter concisus (strain 13826) protein is Large ribosomal subunit protein bL28.